The sequence spans 155 residues: Aspartate carbamoyltransferase regulatory chain (155 aa).

Zn(2+) contacts are provided by cysteine 113, cysteine 118, cysteine 139, and cysteine 142.

It belongs to the PyrI family. Contains catalytic and regulatory chains. Requires Zn(2+) as cofactor.

Functionally, involved in allosteric regulation of aspartate carbamoyltransferase. The chain is Aspartate carbamoyltransferase regulatory chain from Methanosphaerula palustris (strain ATCC BAA-1556 / DSM 19958 / E1-9c).